The following is a 568-amino-acid chain: Protein NDNF (568 aa).

The N-terminal stretch at 1–19 (MVLLHWCLLWLLFPLSSRT) is a signal peptide. Fibronectin type-III domains are found at residues 261–331 (NSGK…VGTF) and 445–564 (PSLP…VVKT). Residue Asn322 is glycosylated (N-linked (GlcNAc...) asparagine).

Binds heparin and chondroitin sulfate. In terms of processing, O-glycosylated; contains heparan sulfate and chondroitin sulfate. N-glycosylated. As to expression, expressed in neurons along the gonadotropin-releasing hormone (GnRH) expressing neurons migratory route.

It is found in the secreted. Functionally, secretory protein that plays a role in various cellular processes. Acts as a chemorepellent acting on gonadotropin-releasing hormone (GnRH) expressing neurons regulating their migration to the hypothalamus. Also promotes neuron migration, growth and survival as well as neurite outgrowth and is involved in the development of the olfactory system. May also act through the regulation of growth factors activity and downstream signaling. Also regulates extracellular matrix assembly and cell adhesiveness. Promotes endothelial cell survival, vessel formation and plays an important role in the process of revascularization through NOS3-dependent mechanisms. The protein is Protein NDNF (NDNF) of Homo sapiens (Human).